The sequence spans 395 residues: GPI-anchor transamidase (395 aa).

Positions 1-27 (MAVTDSLSRAASTLAAVLLLSFGSVAA) are cleaved as a signal peptide. The Lumenal segment spans residues 28 to 368 (SHIEDQAEQF…PKLKDWHPPG (341 aa)). Positions 79, 82, 118, and 120 each coordinate Ca(2+). The Proton donor role is filled by His164. Cys206 functions as the Nucleophile; acyl-thioester intermediate in the catalytic mechanism. A protein contacts are provided by Cys206, Ser232, and Ser234. An autoinhibitory loop region spans residues 231–236 (DSLSHQ). Cys275 and Cys280 are disulfide-bonded. The helical transmembrane segment at 369 to 385 (GFILGLWALIIMVFFKT) threads the bilayer. Residues 386–395 (YGIKHMKFIF) lie on the Cytoplasmic side of the membrane.

The protein belongs to the peptidase C13 family. In terms of assembly, heteropentamer. Part of the GPI-anchor transamidase complex, consisting of PIGK, PIGT, PIGS, PIGU and GAA1. Interacts with GPAA1. Interacts with PIGT; this interaction, via a disulfide link, stabilizes the expression of GAA1 and PIGK and links them to PIGS. The disulfide bond between PIGK/GPI8 and PIGT is important for normal enzyme activity.

It localises to the endoplasmic reticulum membrane. The protein operates within glycolipid biosynthesis; glycosylphosphatidylinositol-anchor biosynthesis. In the absence of proproteins substrates, exists in an inactive state with a disrupted catalytic site by an autoinhibitory loop. The binding of proprotein substrates, particularly the CSP region, to GPI-T triggers concerted conformational changes that alleviate the inhibition by the autoinhibitory loop. Meanwhile, proprotein residues near the omega- site induce the formation of a catalytic cleft for catalysis, following which the products are released and GPI-T reverts to the inactive state. Functionally, catalytic subunit of the glycosylphosphatidylinositol-anchor (GPI-anchor) transamidase (GPI-T) complex that catalyzes the formation of the linkage between a proprotein and a GPI-anchor and participates in GPI anchored protein biosynthesis. Recognizes diverse proproteins at a C-terminal signal peptide (CSP) region that lacks consensus sequence and replaces it with a GPI-anchor via a transamidation reaction. Transamidation catalysis reaction follows a two-phase mechanism. In the acyl-enzyme phase, the carbonyl group of the proproteins's omega-site undergoes a nucleophilic attack forming an enzyme-substrate thioester bond. Followed by a general acid catalysis that allows CSP releasing, regenerating the carbonyl, and forming the acyl-enzyme intermediate. In the GPI-anchor attachment phase, the amino group of the GPI-anchor's ethanolamine phosphate, the one on third mannose (EtNP3), mediates a nucleophilic attack on the carbonyl of the acyl-enzyme intermediate, replacing the CSP, allowing GPI-anchor attachment to the omega-residue, therefore forming the product and freeing the enzyme. In Pongo abelii (Sumatran orangutan), this protein is GPI-anchor transamidase.